The sequence spans 79 residues: uncharacterized protein (79 aa).

The protein localises to the mitochondrion. This is an uncharacterized protein from Oenothera berteroana (Bertero's evening primrose).